The chain runs to 417 residues: Actin-like protein 7B (417 aa).

The tract at residues 1 to 39 (MATKNNPSPKPMGTAQGDPGEAGTLPAPEAGIRDTGSTQ) is disordered. Serine 8 is modified (phosphoserine).

Belongs to the actin family.

The protein localises to the cytoplasm. Its subcellular location is the cytoskeleton. The sequence is that of Actin-like protein 7B (Actl7b) from Rattus norvegicus (Rat).